The primary structure comprises 95 residues: Aspartyl/glutamyl-tRNA(Asn/Gln) amidotransferase subunit C (95 aa).

It belongs to the GatC family. As to quaternary structure, heterotrimer of A, B and C subunits.

The enzyme catalyses L-glutamyl-tRNA(Gln) + L-glutamine + ATP + H2O = L-glutaminyl-tRNA(Gln) + L-glutamate + ADP + phosphate + H(+). It catalyses the reaction L-aspartyl-tRNA(Asn) + L-glutamine + ATP + H2O = L-asparaginyl-tRNA(Asn) + L-glutamate + ADP + phosphate + 2 H(+). In terms of biological role, allows the formation of correctly charged Asn-tRNA(Asn) or Gln-tRNA(Gln) through the transamidation of misacylated Asp-tRNA(Asn) or Glu-tRNA(Gln) in organisms which lack either or both of asparaginyl-tRNA or glutaminyl-tRNA synthetases. The reaction takes place in the presence of glutamine and ATP through an activated phospho-Asp-tRNA(Asn) or phospho-Glu-tRNA(Gln). The polypeptide is Aspartyl/glutamyl-tRNA(Asn/Gln) amidotransferase subunit C (Campylobacter fetus subsp. fetus (strain 82-40)).